Here is a 158-residue protein sequence, read N- to C-terminus: Ribosome maturation factor RimP (158 aa).

The protein belongs to the RimP family.

The protein localises to the cytoplasm. Required for maturation of 30S ribosomal subunits. The protein is Ribosome maturation factor RimP of Pseudomonas syringae pv. tomato (strain ATCC BAA-871 / DC3000).